We begin with the raw amino-acid sequence, 284 residues long: Homoserine O-acetyltransferase 2 (284 aa).

Catalysis depends on cysteine 133, which acts as the Acyl-thioester intermediate. The substrate site is built by lysine 154 and serine 178. The active-site Proton acceptor is the histidine 220. Glutamate 222 is an active-site residue. Arginine 234 contributes to the substrate binding site.

It belongs to the MetA family.

The protein resides in the cytoplasm. The catalysed reaction is L-homoserine + acetyl-CoA = O-acetyl-L-homoserine + CoA. Its pathway is amino-acid biosynthesis; L-methionine biosynthesis via de novo pathway; O-acetyl-L-homoserine from L-homoserine: step 1/1. Functionally, transfers an acetyl group from acetyl-CoA to L-homoserine, forming acetyl-L-homoserine. This chain is Homoserine O-acetyltransferase 2, found in Ilyobacter polytropus (strain ATCC 51220 / DSM 2926 / LMG 16218 / CuHBu1).